We begin with the raw amino-acid sequence, 800 residues long: DNA topoisomerase 4 subunit A (800 aa).

Positions 31–495 constitute a Topo IIA-type catalytic domain; sequence LPDVRDGLKP…EIEEIKIDKE (465 aa). Y119 acts as the O-(5'-phospho-DNA)-tyrosine intermediate in catalysis.

It belongs to the type II topoisomerase GyrA/ParC subunit family. ParC type 2 subfamily. In terms of assembly, heterotetramer composed of ParC and ParE.

Its subcellular location is the cell membrane. It catalyses the reaction ATP-dependent breakage, passage and rejoining of double-stranded DNA.. Topoisomerase IV is essential for chromosome segregation. It relaxes supercoiled DNA. Performs the decatenation events required during the replication of a circular DNA molecule. This chain is DNA topoisomerase 4 subunit A, found in Staphylococcus aureus (strain MSSA476).